Reading from the N-terminus, the 262-residue chain is 5-methyltetrahydrofolate:corrinoid/iron-sulfur protein co-methyltransferase (262 aa).

The region spanning 1–246 is the Pterin-binding domain; sequence MLIIGERING…ETAATAEILL (246 aa). (6S)-5-methyl-5,6,7,8-tetrahydrofolate-binding residues include N96 and D160. K184 is a binding site for Ca(2+). 3 residues coordinate (6S)-5-methyl-5,6,7,8-tetrahydrofolate: N199, Q202, and R207. A methylcob(III)alamin-binding site is contributed by 202–203; that stretch reads QN. 2 residues coordinate Ca(2+): G222 and D224.

This sequence belongs to the vitamin-B12 dependent methionine synthase family. In terms of assembly, heterohexamer composed of 2 subunits of AcsC, 2 subunits of AcsD and 2 subunits of AcsE. The cofactor is Ca(2+).

The enzyme catalyses methyl-Co(III)-[corrinoid Fe-S protein] + (6S)-5,6,7,8-tetrahydrofolate = Co(I)-[corrinoid Fe-S protein] + (6S)-5-methyl-5,6,7,8-tetrahydrofolate + H(+). In terms of biological role, methyltransferase that mediates the transfer of a N5-methyl group of (6S)-methyltetrahydrofolate to the 5-methoxybenzimidazolylcobamide cofactor of a corrinoid/Fe-S protein (AcsC/AcsD) in the anaerobic acetyl-CoA pathway (Wood-Ljungdahl pathway) of carbon monoxide and carbon dioxide fixation. This is 5-methyltetrahydrofolate:corrinoid/iron-sulfur protein co-methyltransferase (acsE) from Moorella thermoacetica (Clostridium thermoaceticum).